Here is a 591-residue protein sequence, read N- to C-terminus: CTP synthase 1-A (591 aa).

Residues 300-554 enclose the Glutamine amidotransferase type-1 domain; that stretch reads SIALVGKYTK…LASVGRLSQY (255 aa). Residues cysteine 399, histidine 526, and glutamate 528 each act as for GATase activity in the active site.

The protein belongs to the CTP synthase family.

It carries out the reaction UTP + L-glutamine + ATP + H2O = CTP + L-glutamate + ADP + phosphate + 2 H(+). Its pathway is pyrimidine metabolism; CTP biosynthesis via de novo pathway; CTP from UDP: step 2/2. Functionally, this enzyme is involved in the de novo synthesis of CTP, a precursor of DNA, RNA and phospholipids. Catalyzes the ATP-dependent amination of UTP to CTP with either L-glutamine or ammonia as a source of nitrogen. This Xenopus laevis (African clawed frog) protein is CTP synthase 1-A (ctps1-a).